The sequence spans 164 residues: uncharacterized protein (164 aa).

The 129-residue stretch at 1-129 (MGEVRVVGIR…AVLAQAGLLI (129 aa)) folds into the BFN domain.

This is an uncharacterized protein from Mycobacterium tuberculosis (strain CDC 1551 / Oshkosh).